We begin with the raw amino-acid sequence, 1037 residues long: Multidrug resistance protein MdtF (1037 aa).

Residues 1 to 9 (MANYFIDRP) are Cytoplasmic-facing. A helical membrane pass occupies residues 10 to 28 (VFAWVLAIIMMLAGGLAIM). At 29–339 (NLPVAQYPQI…TPFIEISIQE (311 aa)) the chain is on the periplasmic side. Residues 340–359 (VFKTLVEAIILVFLVMYLFL) form a helical membrane-spanning segment. Over 360 to 365 (QNFRAT) the chain is Cytoplasmic. A helical membrane pass occupies residues 366–385 (IIPTIAVPVVILGTFAILSA). Residues 386-391 (VGFTIN) lie on the Periplasmic side of the membrane. Residues 392–413 (TLTMFGMVLAIGLLVDDAIVVV) form a helical membrane-spanning segment. Residues 414–441 (ENVERVIAEDKLPPKEATHKSMGQIQRA) lie on the Cytoplasmic side of the membrane. Residues 442-460 (LVGIAVVLSAVFMPMAFMS) traverse the membrane as a helical segment. Topologically, residues 461-473 (GATGEIYRQFSIT) are periplasmic. A helical membrane pass occupies residues 474 to 496 (LISSMLLSVFVAMSLTPALCATI). Residues 497–536 (LKAAPEGGHKPNALFARFNTLFEKSTQHYTDSTRSLLRCT) are Cytoplasmic-facing. Residues 537-555 (GRYMVVYLLICAGMAVLFL) form a helical membrane-spanning segment. The Periplasmic segment spans residues 556–870 (RTPTSFLPEE…SYQEALSSNQ (315 aa)). Residues 871-890 (APALYAISLVVVFLALAALY) traverse the membrane as a helical segment. At 891-896 (ESWSIP) the chain is on the cytoplasmic side. The helical transmembrane segment at 897–916 (FSVMLVVPLGVVGALLATDL) threads the bilayer. Over 917–922 (RGLSND) the chain is Periplasmic. The chain crosses the membrane as a helical span at residues 923–944 (VYFQVGLLTTIGLSAKNAILIV). Over 945–972 (EFAVEMMQKEGKTPIEAIIEAARMRLRP) the chain is Cytoplasmic. Residues 973–991 (ILMTSLAFILGVLPLVISH) traverse the membrane as a helical segment. The Periplasmic portion of the chain corresponds to 992 to 1004 (GAGSGAQNAVGTG). A helical membrane pass occupies residues 1005–1027 (VMGGMFAATVLAIYFVPVFFVVV). At 1028 to 1037 (EHLFARFKKA) the chain is on the cytoplasmic side.

This sequence belongs to the resistance-nodulation-cell division (RND) (TC 2.A.6) family. As to quaternary structure, homotrimer. Part of the tripartite efflux system MdtEF-TolC, which is composed of an inner membrane transporter, MdtF, a membrane fusion protein, MdtE, and an outer membrane component, TolC. The complex forms a large protein conduit and can translocate molecules across both the inner and outer membranes.

It is found in the cell inner membrane. In terms of biological role, part of the tripartite efflux system MdtEF-TolC, which confers resistance to compounds such as rhodamine 6G, erythromycin, doxorubicin, ethidium bromide, TPP, SDS, deoxycholate, crystal violet and benzalkonium. In Escherichia coli (strain K12), this protein is Multidrug resistance protein MdtF (mdtF).